Here is a 510-residue protein sequence, read N- to C-terminus: Probable cytosol aminopeptidase (510 aa).

Residues Lys282 and Asp287 each coordinate Mn(2+). Lys294 is a catalytic residue. Positions 305, 364, and 366 each coordinate Mn(2+). The active site involves Arg368.

The protein belongs to the peptidase M17 family. Mn(2+) serves as cofactor.

It is found in the cytoplasm. It carries out the reaction Release of an N-terminal amino acid, Xaa-|-Yaa-, in which Xaa is preferably Leu, but may be other amino acids including Pro although not Arg or Lys, and Yaa may be Pro. Amino acid amides and methyl esters are also readily hydrolyzed, but rates on arylamides are exceedingly low.. The enzyme catalyses Release of an N-terminal amino acid, preferentially leucine, but not glutamic or aspartic acids.. Its function is as follows. Presumably involved in the processing and regular turnover of intracellular proteins. Catalyzes the removal of unsubstituted N-terminal amino acids from various peptides. The polypeptide is Probable cytosol aminopeptidase (Cupriavidus pinatubonensis (strain JMP 134 / LMG 1197) (Cupriavidus necator (strain JMP 134))).